Consider the following 46-residue polypeptide: Photosystem II reaction center protein K (46 aa).

Positions 1-9 (MLILLNTFA) are excised as a propeptide. A helical transmembrane segment spans residues 25-45 (LPLIPLFFFLLVFVWQAAVGF).

Belongs to the PsbK family. As to quaternary structure, PSII is composed of 1 copy each of membrane proteins PsbA, PsbB, PsbC, PsbD, PsbE, PsbF, PsbH, PsbI, PsbJ, PsbK, PsbL, PsbM, PsbT, PsbX, PsbY, Psb30/Ycf12, peripheral proteins PsbO, CyanoQ (PsbQ), PsbU, PsbV and a large number of cofactors. It forms dimeric complexes.

The protein resides in the cellular thylakoid membrane. Its function is as follows. One of the components of the core complex of photosystem II (PSII). PSII is a light-driven water:plastoquinone oxidoreductase that uses light energy to abstract electrons from H(2)O, generating O(2) and a proton gradient subsequently used for ATP formation. It consists of a core antenna complex that captures photons, and an electron transfer chain that converts photonic excitation into a charge separation. The protein is Photosystem II reaction center protein K of Prochlorococcus marinus (strain MIT 9215).